Consider the following 369-residue polypeptide: Anhydro-N-acetylmuramic acid kinase (369 aa).

Position 9–16 (9–16) interacts with ATP; sequence GTSLDAVD.

Belongs to the anhydro-N-acetylmuramic acid kinase family.

It catalyses the reaction 1,6-anhydro-N-acetyl-beta-muramate + ATP + H2O = N-acetyl-D-muramate 6-phosphate + ADP + H(+). It participates in amino-sugar metabolism; 1,6-anhydro-N-acetylmuramate degradation. The protein operates within cell wall biogenesis; peptidoglycan recycling. Functionally, catalyzes the specific phosphorylation of 1,6-anhydro-N-acetylmuramic acid (anhMurNAc) with the simultaneous cleavage of the 1,6-anhydro ring, generating MurNAc-6-P. Is required for the utilization of anhMurNAc either imported from the medium or derived from its own cell wall murein, and thus plays a role in cell wall recycling. The polypeptide is Anhydro-N-acetylmuramic acid kinase (Phenylobacterium zucineum (strain HLK1)).